A 341-amino-acid chain; its full sequence is tRNA (guanine-N(7)-)-methyltransferase (341 aa).

Residues E75, E100, D127, and D150 each contribute to the S-adenosyl-L-methionine site. D150 is a catalytic residue. K154 serves as a coordination point for substrate. The segment at 156-161 is interaction with RNA; that stretch reads RHNKRR. D186 lines the substrate pocket.

The protein belongs to the class I-like SAM-binding methyltransferase superfamily. TrmB family.

The enzyme catalyses guanosine(46) in tRNA + S-adenosyl-L-methionine = N(7)-methylguanosine(46) in tRNA + S-adenosyl-L-homocysteine. The protein operates within tRNA modification; N(7)-methylguanine-tRNA biosynthesis. Its function is as follows. Catalyzes the formation of N(7)-methylguanine at position 46 (m7G46) in tRNA. This Xanthomonas euvesicatoria pv. vesicatoria (strain 85-10) (Xanthomonas campestris pv. vesicatoria) protein is tRNA (guanine-N(7)-)-methyltransferase.